The following is a 399-amino-acid chain: tRNA-dihydrouridine(16/17) synthase [NAD(P)(+)] (399 aa).

FMN is bound by residues Pro-24–Val-26 and Gln-80. Residue Cys-109 is the Proton donor of the active site. FMN is bound by residues Lys-148, His-176, Asn-211 to Asn-213, and Ala-235 to Glu-236.

It belongs to the Dus family. Dus1 subfamily. Requires FMN as cofactor.

It localises to the nucleus. Its subcellular location is the mitochondrion. The enzyme catalyses 5,6-dihydrouridine(16) in tRNA + NADP(+) = uridine(16) in tRNA + NADPH + H(+). It catalyses the reaction 5,6-dihydrouridine(16) in tRNA + NAD(+) = uridine(16) in tRNA + NADH + H(+). It carries out the reaction 5,6-dihydrouridine(17) in tRNA + NAD(+) = uridine(17) in tRNA + NADH + H(+). The catalysed reaction is 5,6-dihydrouridine(17) in tRNA + NADP(+) = uridine(17) in tRNA + NADPH + H(+). The enzyme catalyses a 5,6-dihydrouridine in mRNA + NAD(+) = a uridine in mRNA + NADH + H(+). It catalyses the reaction a 5,6-dihydrouridine in mRNA + NADP(+) = a uridine in mRNA + NADPH + H(+). Functionally, catalyzes the synthesis of dihydrouridine, a modified base found in the D-loop of most tRNAs. Also able to mediate dihydrouridylation of some mRNAs, thereby affecting their translation. The chain is tRNA-dihydrouridine(16/17) synthase [NAD(P)(+)] from Schizosaccharomyces pombe (strain 972 / ATCC 24843) (Fission yeast).